The primary structure comprises 371 residues: Macrolide export protein MacA (371 aa).

Residues 1 to 10 (MKKRKTVKKR) lie on the Cytoplasmic side of the membrane. A helical membrane pass occupies residues 11-31 (YVIALVIVIAGLITLWRILNA). Residues 32–371 (PVPTYQTLIV…IGEAKPGAAQ (340 aa)) lie on the Periplasmic side of the membrane. A coiled-coil region spans residues 92 to 137 (IDPEQAENQIKEVEATLMELRAQRQQAEAELKLARVTYSRQQRLAQ).

Belongs to the membrane fusion protein (MFP) (TC 8.A.1) family. In terms of assembly, homohexamer. Part of the tripartite efflux system MacAB-TolC, which is composed of an inner membrane transporter, MacB, a periplasmic membrane fusion protein, MacA, and an outer membrane component, TolC. The complex forms a large protein conduit and can translocate molecules across both the inner and outer membranes. MacA interacts with MacB and TolC.

It localises to the cell inner membrane. Its function is as follows. Part of the tripartite efflux system MacAB-TolC. MacA stimulates the ATPase activity of MacB by promoting the closed ATP-bound state of MacB, increases the capacity of MacB to bind macrolides such as erythromycin, and provides a physical link between MacB and TolC. Confers resistance against macrolides. The sequence is that of Macrolide export protein MacA (macA) from Escherichia coli O157:H7.